A 167-amino-acid polypeptide reads, in one-letter code: Low molecular mass early light-inducible protein HV60, chloroplastic (167 aa).

A chloroplast-targeting transit peptide spans Met1–Val33. The next 2 membrane-spanning stretches (helical) occupy residues Gly101 to Leu121 and Phe145 to Ile165.

The protein belongs to the ELIP/psbS family.

Its subcellular location is the plastid. It is found in the chloroplast membrane. Its function is as follows. Probably involved in the integration of pigments into the mature pigment-protein complexes. This chain is Low molecular mass early light-inducible protein HV60, chloroplastic, found in Hordeum vulgare (Barley).